A 598-amino-acid polypeptide reads, in one-letter code: UvrABC system protein C (598 aa).

The GIY-YIG domain occupies 14-91 (DSPGCYLHKD…IQKNMPKYNI (78 aa)). The region spanning 196–231 (DKIIEDLRSKMLAASEEMAFERAAEYRDLISGIATM) is the UVR domain.

It belongs to the UvrC family. In terms of assembly, interacts with UvrB in an incision complex.

It localises to the cytoplasm. In terms of biological role, the UvrABC repair system catalyzes the recognition and processing of DNA lesions. UvrC both incises the 5' and 3' sides of the lesion. The N-terminal half is responsible for the 3' incision and the C-terminal half is responsible for the 5' incision. This Streptococcus pyogenes serotype M5 (strain Manfredo) protein is UvrABC system protein C.